A 417-amino-acid polypeptide reads, in one-letter code: Tol-Pal system protein TolB (417 aa).

The signal sequence occupies residues M1–A16.

Belongs to the TolB family. As to quaternary structure, the Tol-Pal system is composed of five core proteins: the inner membrane proteins TolA, TolQ and TolR, the periplasmic protein TolB and the outer membrane protein Pal. They form a network linking the inner and outer membranes and the peptidoglycan layer.

Its subcellular location is the periplasm. Functionally, part of the Tol-Pal system, which plays a role in outer membrane invagination during cell division and is important for maintaining outer membrane integrity. The chain is Tol-Pal system protein TolB from Helicobacter pylori (strain J99 / ATCC 700824) (Campylobacter pylori J99).